Here is a 314-residue protein sequence, read N- to C-terminus: MPLEQRSQHCKPEEGLEAQGEALGLVGAQAPATEEQETASSSSTLVEVTLREVPAAESPSPPHSPQGASTLPTTINYTLWSQSDEGSSNEEQEGPSTFPDLETSFQVALSRKMAELVHFLLLKYRAREPFTKAEMLGSVIRNFQDFFPVIFSKASEYLQLVFGIEVVEVVRIGHLYILVTCLGLSYDGLLGDNQIVPKTGLLIIVLAIIAKEGDCAPEEKIWEELSVLEASDGREDSVFAHPRKLLTQDLVQENYLEYRQVPGSDPACYEFLWGPRALVETSYVKVLHHLLKISGGPHISYPPLHEWAFREGEE.

Residues 1-14 are compositionally biased toward basic and acidic residues; sequence MPLEQRSQHCKPEE. The tract at residues 1-72 is disordered; it reads MPLEQRSQHC…HSPQGASTLP (72 aa). The span at 17-44 shows a compositional bias: low complexity; that stretch reads EAQGEALGLVGAQAPATEEQETASSSST. Residues 109–308 enclose the MAGE domain; that stretch reads LSRKMAELVH…ISYPPLHEWA (200 aa).

Expressed in many tumors of several types, such as melanoma, head and neck squamous cell carcinoma, lung carcinoma and breast carcinoma, but not in normal tissues except for testes.

Functionally, not known, though may play a role tumor transformation or progression. In vitro promotes cell viability in melanoma cell lines. The chain is Melanoma-associated antigen 12 (MAGEA12) from Homo sapiens (Human).